The following is a 661-amino-acid chain: Probable urea active transporter 3 (661 aa).

15 helical membrane passes run 13 to 33 (GIVI…TYVL), 56 to 76 (GLIS…LTSA), 86 to 106 (GSMW…VIAL), 132 to 152 (AVFL…LLLG), 165 to 185 (VVAA…SGGL), 197 to 217 (VIVY…SVHI), 251 to 271 (AVFV…CDPS), 288 to 308 (YFAG…AAAL), 352 to 372 (AGVL…LVAF), 397 to 417 (VTHV…VLFN), 419 to 439 (IGIT…PAVF), 454 to 474 (GMII…VGSC), 495 to 515 (VGNF…SYFF), 556 to 576 (IGIF…PLPM), and 591 to 611 (WIIV…FYPL).

It belongs to the sodium:solute symporter (SSF) (TC 2.A.21) family.

The protein localises to the membrane. The protein resides in the golgi apparatus membrane. In terms of biological role, involved in active transport of urea. This chain is Probable urea active transporter 3 (dur3-3), found in Schizosaccharomyces pombe (strain 972 / ATCC 24843) (Fission yeast).